The primary structure comprises 339 residues: Ketol-acid reductoisomerase (NADP(+)) (339 aa).

In terms of domain architecture, KARI N-terminal Rossmann spans 1 to 182 (MRVYYDRDAD…GGGRSGIIET (182 aa)). NADP(+) is bound by residues 24 to 27 (YGSQ), Arg-48, Ser-51, Ser-53, and 83 to 86 (DELQ). The active site involves His-108. Gly-134 is a binding site for NADP(+). One can recognise a KARI C-terminal knotted domain in the interval 183-328 (TFREECETDL…EKLRAMMPWI (146 aa)). Residues Asp-191, Glu-195, Glu-227, and Glu-231 each contribute to the Mg(2+) site. A substrate-binding site is contributed by Ser-252.

It belongs to the ketol-acid reductoisomerase family. It depends on Mg(2+) as a cofactor.

The enzyme catalyses (2R)-2,3-dihydroxy-3-methylbutanoate + NADP(+) = (2S)-2-acetolactate + NADPH + H(+). The catalysed reaction is (2R,3R)-2,3-dihydroxy-3-methylpentanoate + NADP(+) = (S)-2-ethyl-2-hydroxy-3-oxobutanoate + NADPH + H(+). It functions in the pathway amino-acid biosynthesis; L-isoleucine biosynthesis; L-isoleucine from 2-oxobutanoate: step 2/4. The protein operates within amino-acid biosynthesis; L-valine biosynthesis; L-valine from pyruvate: step 2/4. In terms of biological role, involved in the biosynthesis of branched-chain amino acids (BCAA). Catalyzes an alkyl-migration followed by a ketol-acid reduction of (S)-2-acetolactate (S2AL) to yield (R)-2,3-dihydroxy-isovalerate. In the isomerase reaction, S2AL is rearranged via a Mg-dependent methyl migration to produce 3-hydroxy-3-methyl-2-ketobutyrate (HMKB). In the reductase reaction, this 2-ketoacid undergoes a metal-dependent reduction by NADPH to yield (R)-2,3-dihydroxy-isovalerate. In Chelativorans sp. (strain BNC1), this protein is Ketol-acid reductoisomerase (NADP(+)).